The sequence spans 254 residues: Phosphoribosylaminoimidazole-succinocarboxamide synthase (254 aa).

Belongs to the SAICAR synthetase family.

It catalyses the reaction 5-amino-1-(5-phospho-D-ribosyl)imidazole-4-carboxylate + L-aspartate + ATP = (2S)-2-[5-amino-1-(5-phospho-beta-D-ribosyl)imidazole-4-carboxamido]succinate + ADP + phosphate + 2 H(+). The protein operates within purine metabolism; IMP biosynthesis via de novo pathway; 5-amino-1-(5-phospho-D-ribosyl)imidazole-4-carboxamide from 5-amino-1-(5-phospho-D-ribosyl)imidazole-4-carboxylate: step 1/2. This is Phosphoribosylaminoimidazole-succinocarboxamide synthase from Bartonella henselae (strain ATCC 49882 / DSM 28221 / CCUG 30454 / Houston 1) (Rochalimaea henselae).